The following is a 705-amino-acid chain: Dynein axonemal intermediate chain 1 (705 aa).

2 disordered regions span residues M1–P44 and A122–A169. 2 positions are modified to phosphoserine: S124 and S127. Residues S124–T135 show a composition bias toward polar residues. The span at E136–A159 shows a compositional bias: acidic residues. 5 WD repeats span residues S386–C426, K435–I478, A543–I583, D585–I625, and K633–P672.

The protein belongs to the dynein intermediate chain family. In terms of assembly, consists of at least two heavy chains and a number of intermediate and light chains. Interacts with BICD2. Interacts with CFAP45 and CFAP52. Interacts with CFAP53.

The protein localises to the cytoplasm. Its subcellular location is the cytoskeleton. It is found in the cilium axoneme. Part of the dynein complex of respiratory cilia. In Rattus norvegicus (Rat), this protein is Dynein axonemal intermediate chain 1 (Dnai1).